Reading from the N-terminus, the 172-residue chain is Cytochrome b6-f complex iron-sulfur subunit (172 aa).

A helical transmembrane segment spans residues 19 to 39 (LNALLSGSVGVVVVGALYPVV). The Rieske domain maps to 61-161 (GKPISVSELL…ATVDGDNVRF (101 aa)). [2Fe-2S] cluster contacts are provided by Cys107, His109, Cys125, and His128. A disulfide bond links Cys112 and Cys127.

It belongs to the Rieske iron-sulfur protein family. In terms of assembly, the 4 large subunits of the cytochrome b6-f complex are cytochrome b6, subunit IV (17 kDa polypeptide, PetD), cytochrome f and the Rieske protein, while the 4 small subunits are PetG, PetL, PetM and PetN. The complex functions as a dimer. It depends on [2Fe-2S] cluster as a cofactor.

It is found in the cellular thylakoid membrane. The enzyme catalyses 2 oxidized [plastocyanin] + a plastoquinol + 2 H(+)(in) = 2 reduced [plastocyanin] + a plastoquinone + 4 H(+)(out). Functionally, component of the cytochrome b6-f complex, which mediates electron transfer between photosystem II (PSII) and photosystem I (PSI), cyclic electron flow around PSI, and state transitions. This Synechococcus sp. (strain JA-2-3B'a(2-13)) (Cyanobacteria bacterium Yellowstone B-Prime) protein is Cytochrome b6-f complex iron-sulfur subunit.